The chain runs to 314 residues: Melanoma-associated antigen 6 (314 aa).

Basic and acidic residues predominate over residues 1-20 (MPLEQRSQHCKPEEGLEARG). The segment at 1–99 (MPLEQRSQHC…QEEEGPSTFP (99 aa)) is disordered. The span at 21-44 (EALGLVGAQAPATEEQEAASSSST) shows a compositional bias: low complexity. Positions 65–87 (PQGASSLPTTMNYPLWSQSYEDS) are enriched in polar residues. In terms of domain architecture, MAGE spans 109 to 308 (LSRKVAKLVH…ISYPLLHEWA (200 aa)).

In terms of assembly, interacts with TRIM28. In terms of processing, ubiquitinated by the DCX(DCAF12) complex specifically recognizes the diglutamate (Glu-Glu) at the C-terminus, leading to its degradation. Expressed in many tumors of several types, such as melanoma, head and neck squamous cell carcinoma, lung carcinoma and breast carcinoma, but not in normal tissues except for testes.

In terms of biological role, activator of ubiquitin ligase activity of RING-type zinc finger-containing E3 ubiquitin-protein ligases that acts as a repressor of autophagy. May enhance ubiquitin ligase activity of TRIM28 and stimulate p53/TP53 ubiquitination by TRIM28. Proposed to act through recruitment and/or stabilization of the Ubl-conjugating enzyme (E2) at the E3:substrate complex. May play a role in tumor transformation or aspects of tumor progression. In vitro promotes cell viability in melanoma cell lines. The sequence is that of Melanoma-associated antigen 6 from Homo sapiens (Human).